A 314-amino-acid chain; its full sequence is Homoserine O-acetyltransferase (314 aa).

Cys-142 acts as the Acyl-thioester intermediate in catalysis. Positions 163 and 192 each coordinate substrate. The active-site Proton acceptor is His-235. Glu-237 is an active-site residue. Substrate is bound at residue Arg-249.

The protein belongs to the MetA family.

It localises to the cytoplasm. It catalyses the reaction L-homoserine + acetyl-CoA = O-acetyl-L-homoserine + CoA. It participates in amino-acid biosynthesis; L-methionine biosynthesis via de novo pathway; O-acetyl-L-homoserine from L-homoserine: step 1/1. Its function is as follows. Transfers an acetyl group from acetyl-CoA to L-homoserine, forming acetyl-L-homoserine. This is Homoserine O-acetyltransferase from Desulfovibrio desulfuricans (strain ATCC 27774 / DSM 6949 / MB).